We begin with the raw amino-acid sequence, 113 residues long: Putative pterin-4-alpha-carbinolamine dehydratase (113 aa).

This sequence belongs to the pterin-4-alpha-carbinolamine dehydratase family.

The enzyme catalyses (4aS,6R)-4a-hydroxy-L-erythro-5,6,7,8-tetrahydrobiopterin = (6R)-L-erythro-6,7-dihydrobiopterin + H2O. The polypeptide is Putative pterin-4-alpha-carbinolamine dehydratase (Legionella pneumophila (strain Lens)).